The chain runs to 426 residues: Enolase (426 aa).

Glutamine 163 contacts (2R)-2-phosphoglycerate. Glutamate 205 acts as the Proton donor in catalysis. Residues aspartate 242, glutamate 286, and aspartate 313 each contribute to the Mg(2+) site. Residues lysine 338, arginine 367, serine 368, and lysine 389 each coordinate (2R)-2-phosphoglycerate. The active-site Proton acceptor is lysine 338.

The protein belongs to the enolase family. The cofactor is Mg(2+).

Its subcellular location is the cytoplasm. It is found in the secreted. The protein localises to the cell surface. It catalyses the reaction (2R)-2-phosphoglycerate = phosphoenolpyruvate + H2O. Its pathway is carbohydrate degradation; glycolysis; pyruvate from D-glyceraldehyde 3-phosphate: step 4/5. Functionally, catalyzes the reversible conversion of 2-phosphoglycerate (2-PG) into phosphoenolpyruvate (PEP). It is essential for the degradation of carbohydrates via glycolysis. The sequence is that of Enolase from Helicobacter pylori (strain ATCC 700392 / 26695) (Campylobacter pylori).